Here is a 323-residue protein sequence, read N- to C-terminus: Elongation factor P--(R)-beta-lysine ligase (323 aa).

Residue 74-76 (SPE) coordinates substrate. ATP is bound by residues 98-100 (RNE) and N107. Residue Y116 coordinates substrate. 242–243 (EL) contacts ATP. E249 provides a ligand contact to substrate. G298 is an ATP binding site.

This sequence belongs to the class-II aminoacyl-tRNA synthetase family. EpmA subfamily. In terms of assembly, homodimer.

The catalysed reaction is D-beta-lysine + L-lysyl-[protein] + ATP = N(6)-((3R)-3,6-diaminohexanoyl)-L-lysyl-[protein] + AMP + diphosphate + H(+). In terms of biological role, with EpmB is involved in the beta-lysylation step of the post-translational modification of translation elongation factor P (EF-P). Catalyzes the ATP-dependent activation of (R)-beta-lysine produced by EpmB, forming a lysyl-adenylate, from which the beta-lysyl moiety is then transferred to the epsilon-amino group of a conserved specific lysine residue in EF-P. The chain is Elongation factor P--(R)-beta-lysine ligase from Vibrio parahaemolyticus serotype O3:K6 (strain RIMD 2210633).